The chain runs to 322 residues: 6-deoxy-6-sulfo-D-fructose transketolase subunit SqwH (322 aa).

It belongs to the transketolase family. Forms a complex with SqwG. Requires thiamine diphosphate as cofactor.

The catalysed reaction is 6-deoxy-6-sulfo-D-fructose + D-glyceraldehyde 3-phosphate = 4-deoxy-4-sulfo-D-erythrose + D-xylulose 5-phosphate. It carries out the reaction 4-deoxy-4-sulfo-D-erythrulose + D-glyceraldehyde 3-phosphate = sulfoacetaldehyde + D-xylulose 5-phosphate. Functionally, part of the sulfo-TK pathway, a D-sulfoquinovose degradation pathway that produces 2-hydroxyethane-1-sulfonate (isethionate). Catalyzes two steps of the pathway: the formation of 4-deoxy-4-sulfoerythrose (SE) and xylulose 5-phosphate from 6-deoxy-6-sulfo-D-fructose (SF) and glyceraldehyde 3-phosphate, and the formation of sulfoacetaldehyde (SA) and xylulose 5-phosphate from 4-deoxy-4-sulfo-D-erythrulose (SEu) and glyceraldehyde 3-phosphate. The chain is 6-deoxy-6-sulfo-D-fructose transketolase subunit SqwH from Clostridium sp. (strain MSTE9).